Reading from the N-terminus, the 459-residue chain is Vicilin (459 aa).

The N-terminal stretch at 1–28 (MAATTMKASFPLLMLMGISFLASVCVSS) is a signal peptide. Residues 36–194 (FIFKSNKFQT…SFNTDYEEIE (159 aa)) enclose the Cupin type-1 1 domain. Disordered stretches follow at residues 235-258 (LSKNAKSTSKKSVSSESEPFNLRS), 321-346 (ELVGQRNENQQEQRKEDDEEEEQGEE), and 430-459 (ENQKQSHFADAQPQQRERGSRETRDRLSSV). Positions 238–251 (NAKSTSKKSVSSES) are enriched in low complexity. Positions 254-426 (FNLRSRGPIY…AFPGSAQEVD (173 aa)) constitute a Cupin type-1 2 domain. Acidic residues predominate over residues 337-346 (DDEEEEQGEE). The span at 444–459 (QRERGSRETRDRLSSV) shows a compositional bias: basic and acidic residues.

It belongs to the 7S seed storage protein family.

Its subcellular location is the vacuole. The protein localises to the aleurone grain. Seed storage protein. In Pisum sativum (Garden pea), this protein is Vicilin.